The primary structure comprises 671 residues: NADH-quinone oxidoreductase subunit G (671 aa).

Residues 1-78 (MIKLNIDGSE…GMVIHTDTPM (78 aa)) enclose the 2Fe-2S ferredoxin-type domain. Residues Cys34, Cys45, Cys48, and Cys62 each contribute to the [2Fe-2S] cluster site. The 40-residue stretch at 78 to 117 (MVKKAREGVMEFLLINHPLDCPICDQGGECDLQDQAFRYG) folds into the 4Fe-4S His(Cys)3-ligated-type domain. His94, Cys98, Cys101, Cys107, Cys146, Cys149, Cys152, and Cys196 together coordinate [4Fe-4S] cluster. The 4Fe-4S Mo/W bis-MGD-type domain occupies 215-271 (LKHTASIGVHDAEGSNIRIDSRGDEVMRILPRVNEEINEEWLSDKNRFSYDGLKYQR).

It belongs to the complex I 75 kDa subunit family. It depends on [2Fe-2S] cluster as a cofactor. [4Fe-4S] cluster is required as a cofactor.

It carries out the reaction a quinone + NADH + 5 H(+)(in) = a quinol + NAD(+) + 4 H(+)(out). NDH-1 shuttles electrons from NADH, via FMN and iron-sulfur (Fe-S) centers, to quinones in the respiratory chain. Couples the redox reaction to proton translocation (for every two electrons transferred, four hydrogen ions are translocated across the cytoplasmic membrane), and thus conserves the redox energy in a proton gradient. The sequence is that of NADH-quinone oxidoreductase subunit G (nuoG) from Rickettsia felis (strain ATCC VR-1525 / URRWXCal2) (Rickettsia azadi).